Here is a 145-residue protein sequence, read N- to C-terminus: Small ribosomal subunit protein uS19 (145 aa).

It belongs to the universal ribosomal protein uS19 family. Component of the small ribosomal subunit.

It is found in the cytoplasm. Component of the small ribosomal subunit. The ribosome is a large ribonucleoprotein complex responsible for the synthesis of proteins in the cell. This Xenopus laevis (African clawed frog) protein is Small ribosomal subunit protein uS19 (rps15).